The following is a 269-amino-acid chain: Transmembrane protein 41B (269 aa).

A run of 6 helical transmembrane segments spans residues T30–Y50, F87–I107, L125–L147, L175–I195, P203–I223, and S240–F260. The VTT domain; required for its function in autophagy stretch occupies residues G118–L229.

The protein belongs to the TMEM41 family.

It localises to the endoplasmic reticulum membrane. The protein localises to the endomembrane system. It carries out the reaction a 1,2-diacyl-sn-glycero-3-phospho-L-serine(in) = a 1,2-diacyl-sn-glycero-3-phospho-L-serine(out). The enzyme catalyses cholesterol(in) = cholesterol(out). It catalyses the reaction a 1,2-diacyl-sn-glycero-3-phosphocholine(in) = a 1,2-diacyl-sn-glycero-3-phosphocholine(out). The catalysed reaction is a 1,2-diacyl-sn-glycero-3-phosphoethanolamine(in) = a 1,2-diacyl-sn-glycero-3-phosphoethanolamine(out). Functionally, phospholipid scramblase involved in lipid homeostasis and membrane dynamics processes. Has phospholipid scramblase activity toward cholesterol and phosphatidylserine, as well as phosphatidylethanolamine and phosphatidylcholine. Required for autophagosome formation: participates in early stages of autophagosome biogenesis at the endoplasmic reticulum (ER) membrane by reequilibrating the leaflets of the ER as lipids are extracted by ATG2 (ATG2A or ATG2B) to mediate autophagosome assembly. In addition to autophagy, involved in other processes in which phospholipid scramblase activity is required. Required for normal motor neuron development. The polypeptide is Transmembrane protein 41B (Gallus gallus (Chicken)).